The chain runs to 468 residues: Aldehyde dehydrogenase family 3 member B1 (468 aa).

Methionine 1 bears the N-acetylmethionine mark. 188–193 serves as a coordination point for NAD(+); that stretch reads GNAYVG. Catalysis depends on residues glutamate 210 and cysteine 244. S-palmitoyl cysteine attachment occurs at residues cysteine 462 and cysteine 463. At cysteine 465 the chain carries Cysteine methyl ester. Cysteine 465 carries the S-geranylgeranyl cysteine lipid modification. The propeptide at 466 to 468 is removed in mature form; it reads TLL.

It belongs to the aldehyde dehydrogenase family. Post-translationally, dually lipidated in the C-terminus; prenylation occurs prior to, and is a prerequisite for palmitoylation. It is also required for activity towards long-chain substrates. Highly expressed in kidney and liver. In brain is expressed at moderate levels in cortex, striatum and hippocampus, and at lower levels in brainstem and cerebellum.

It is found in the cell membrane. It catalyses the reaction an aldehyde + NAD(+) + H2O = a carboxylate + NADH + 2 H(+). It carries out the reaction a long-chain fatty aldehyde + NAD(+) + H2O = a long-chain fatty acid + NADH + 2 H(+). The catalysed reaction is a medium-chain fatty aldehyde + NAD(+) + H2O = a medium-chain fatty acid + NADH + 2 H(+). The enzyme catalyses octanal + NAD(+) + H2O = octanoate + NADH + 2 H(+). It catalyses the reaction nonanal + NAD(+) + H2O = nonanoate + NADH + 2 H(+). It carries out the reaction hexadecanoate + NADH + 2 H(+) = hexadecanal + NAD(+) + H2O. The catalysed reaction is (2E)-octenal + NAD(+) + H2O = (2E)-octenoate + NADH + 2 H(+). The enzyme catalyses (E)-non-2-enal + NAD(+) + H2O = (E)-non-2-enoate + NADH + 2 H(+). It catalyses the reaction (E)-4-hydroxynon-2-enal + NAD(+) + H2O = (E)-4-hydroxynon-2-enoate + NADH + 2 H(+). It carries out the reaction (2E)-hexadecenal + NAD(+) + H2O = (E)-hexadec-2-enoate + NADH + 2 H(+). The catalysed reaction is benzaldehyde + NAD(+) + H2O = benzoate + NADH + 2 H(+). The enzyme catalyses an aldehyde + NADP(+) + H2O = a carboxylate + NADPH + 2 H(+). It catalyses the reaction a medium-chain fatty aldehyde + NADP(+) + H2O = a medium-chain fatty acid + NADPH + 2 H(+). It carries out the reaction hexanal + NADP(+) + H2O = hexanoate + NADPH + 2 H(+). The catalysed reaction is octanal + NADP(+) + H2O = octanoate + NADPH + 2 H(+). The enzyme catalyses nonanal + NADP(+) + H2O = nonanoate + NADPH + 2 H(+). It catalyses the reaction (2E)-octenal + NADP(+) + H2O = (2E)-octenoate + NADPH + 2 H(+). It carries out the reaction (E)-non-2-enal + NADP(+) + H2O = (E)-non-2-enoate + NADPH + 2 H(+). The catalysed reaction is (E)-4-hydroxynon-2-enal + NADP(+) + H2O = (E)-4-hydroxynon-2-enoate + NADPH + 2 H(+). The enzyme catalyses benzaldehyde + NADP(+) + H2O = benzoate + NADPH + 2 H(+). Its pathway is alcohol metabolism; ethanol degradation; acetate from ethanol: step 2/2. Oxidizes medium and long chain saturated and unsaturated fatty aldehydes generated in the plasma membrane into non-toxic fatty acids. May have a protective role against the cytotoxicity induced by lipid peroxidation. Short-chain fatty aldehydes are not good substrates. Can use both NADP(+) and NAD(+) as electron acceptor in vitro, however in vivo preference will depend on their tissue levels. Low activity towards acetaldehyde and 3,4-dihydroxyphenylacetaldehyde. Able to metabolize aromatic aldehydes such as benzaldehyde to their acid form. This Mus musculus (Mouse) protein is Aldehyde dehydrogenase family 3 member B1 (Aldh3b1).